The chain runs to 346 residues: MSESYKNAGVDIEAGYEAVKRMKKHVERTKRIGAMGGLGGFGGMFDLSELPYKQPVLISGTDGVGTKLKLAFAMDKHDTIGIDAVAMCVNDVLAQGAEPLFFLDYLAVGKADPVKIEEIVKGVAEGCVQSGSALVGGETAEMPGLYTEDEYDIAGFSVGAAEKDGIVTGENISEGHLLIGLSSSGLHSNGFSLVRKVLLEDAGLNLDETYAPFERPLGEELLEPTKIYVKPVLEAVKSGKIAGMAHVTGGGFIENLPRMMPDGLGVEIDIGSWPVPPIFPFIQEKGGLKSEEMFNVFNMGIGFVLAVKEEDMTDVIQTLENNGEKAYLIGRVKAGSGVVFGGAGLS.

The protein belongs to the AIR synthase family.

It localises to the cytoplasm. The enzyme catalyses 2-formamido-N(1)-(5-O-phospho-beta-D-ribosyl)acetamidine + ATP = 5-amino-1-(5-phospho-beta-D-ribosyl)imidazole + ADP + phosphate + H(+). The protein operates within purine metabolism; IMP biosynthesis via de novo pathway; 5-amino-1-(5-phospho-D-ribosyl)imidazole from N(2)-formyl-N(1)-(5-phospho-D-ribosyl)glycinamide: step 2/2. This Bacillus licheniformis (strain ATCC 14580 / DSM 13 / JCM 2505 / CCUG 7422 / NBRC 12200 / NCIMB 9375 / NCTC 10341 / NRRL NRS-1264 / Gibson 46) protein is Phosphoribosylformylglycinamidine cyclo-ligase.